The chain runs to 406 residues: Plasma serine protease inhibitor (406 aa).

Residues 1–19 (MQLFLLLCLVLLSPQGASL) form the signal peptide. Positions 20 to 25 (HRHHPR) are cleaved as a propeptide — removed in mature form. T39 carries O-linked (GalNAc...) threonine glycosylation. 3 N-linked (GlcNAc...) asparagine glycosylation sites follow: N249, N262, and N338.

Belongs to the serpin family. Forms protease inhibiting heterodimers in extracellular body fluids with serine proteases such as activated protein C/coagulation factor V/F5, acrosin/ACR, chymotrypsinogen B/CTRB1, prothrombin/F2, factor Xa/F10, factor XI/F11, kallikrein/KLKB1, tissue kallikrein, trypsin/PRSS1, prostate specific antigen/KLK3, tissue plasminogen activator/PLAT and urinary plasminogen activator/PLAU. Forms membrane-anchored serine proteases inhibiting heterodimers with TMPRSS7 and TMPRSS11E. Interacts with SEMG2. N- and O-glycosylated. N-glycosylation consists of a mixture of sialylated bi- (including sialyl-Lewis X epitopes), tri- and tetra-antennary complex-type chains; affects the maximal heparin- and thrombomodulin-enhanced rates of thrombin inhibition. O-glycosylated with core 1 or possibly core 8 glycans. Further modified with 2 sialic acid residues. Post-translationally, proteolytically cleaved. Inhibition of proteases is accompanied by formation of a stable enzyme-inhibitor complex and by degradation of the serpin to lower molecular weight derivatives. Proteolytically cleaved at the N-terminus; inhibits slightly the heparin- and thrombomodulin-enhanced rates of thrombin inhibition. In terms of tissue distribution, predominantly expressed in the epithelium of seminal vesicles. Expressed in the proximal tubular epithelium of the kidney. Expressed in the superficial and more differentiated epidermal keratinocytes of the skin. Expressed in megakaryocytes and platelets. Expressed poorly in kidney tumor cells compared to non tumor kidney tissues. Expressed in spermatozoa. Present in very high concentration in seminal plasma. Present in high concentration in plasma, synovial and Graaf follicle fluids. Present in low concentration in breast milk and in amniotic fluids. Present in very low concentration in urine, cerebrospinal fluids, saliva and tears (at protein level). Strongly expressed in liver. Expressed in kidney, spleen, pancreas, skeletal muscle, heart, testes, ovary, interstitial Leydig cells, epididymal glands, seminal vesicles and prostate.

Its subcellular location is the secreted. The protein resides in the extracellular space. Its inhibitory activity is greatly enhanced in the presence of glycosaminoglycans, heparin, thrombomodulin and phospholipids vesicles. Its function is as follows. Heparin-dependent serine protease inhibitor acting in body fluids and secretions. Inactivates serine proteases by binding irreversibly to their serine activation site. Involved in the regulation of intravascular and extravascular proteolytic activities. Plays hemostatic roles in the blood plasma. Acts as a procoagulant and pro-inflammatory factor by inhibiting the anticoagulant activated protein C factor as well as the generation of activated protein C factor by the thrombin/thrombomodulin complex. Acts as an anticoagulant factor by inhibiting blood coagulation factors like prothrombin, factor XI, factor Xa, plasma kallikrein and fibrinolytic enzymes such as tissue- and urinary-type plasminogen activators. In seminal plasma, inactivates several serine proteases implicated in the reproductive system. Inhibits the serpin acrosin; indirectly protects component of the male genital tract from being degraded by excessive released acrosin. Inhibits tissue- and urinary-type plasminogen activator, prostate-specific antigen and kallikrein activities; has a control on the sperm motility and fertilization. Inhibits the activated protein C-catalyzed degradation of SEMG1 and SEMG2; regulates the degradation of semenogelin during the process of transfer of spermatozoa from the male reproductive tract into the female tract. In urine, inhibits urinary-type plasminogen activator and kallikrein activities. Inactivates membrane-anchored serine proteases activities such as MPRSS7 and TMPRSS11E. Inhibits urinary-type plasminogen activator-dependent tumor cell invasion and metastasis. May also play a non-inhibitory role in seminal plasma and urine as a hydrophobic hormone carrier by its binding to retinoic acid. The protein is Plasma serine protease inhibitor (SERPINA5) of Homo sapiens (Human).